The primary structure comprises 101 residues: ATP synthase subunit c (101 aa).

The next 2 helical transmembrane spans lie at 35–55 and 81–101; these read IGAG…GLIG and GISE…IFVV.

It belongs to the ATPase C chain family. F-type ATPases have 2 components, F(1) - the catalytic core - and F(0) - the membrane proton channel. F(1) has five subunits: alpha(3), beta(3), gamma(1), delta(1), epsilon(1). F(0) has three main subunits: a(1), b(2) and c(10-14). The alpha and beta chains form an alternating ring which encloses part of the gamma chain. F(1) is attached to F(0) by a central stalk formed by the gamma and epsilon chains, while a peripheral stalk is formed by the delta and b chains.

The protein resides in the cell membrane. Functionally, f(1)F(0) ATP synthase produces ATP from ADP in the presence of a proton or sodium gradient. F-type ATPases consist of two structural domains, F(1) containing the extramembraneous catalytic core and F(0) containing the membrane proton channel, linked together by a central stalk and a peripheral stalk. During catalysis, ATP synthesis in the catalytic domain of F(1) is coupled via a rotary mechanism of the central stalk subunits to proton translocation. Its function is as follows. Key component of the F(0) channel; it plays a direct role in translocation across the membrane. A homomeric c-ring of between 10-14 subunits forms the central stalk rotor element with the F(1) delta and epsilon subunits. This Mycoplasma capricolum subsp. capricolum (strain California kid / ATCC 27343 / NCTC 10154) protein is ATP synthase subunit c.